The chain runs to 497 residues: Argininosuccinate lyase (497 aa).

This sequence belongs to the lyase 1 family. Argininosuccinate lyase subfamily.

Its subcellular location is the cytoplasm. It catalyses the reaction 2-(N(omega)-L-arginino)succinate = fumarate + L-arginine. It participates in amino-acid biosynthesis; L-arginine biosynthesis; L-arginine from L-ornithine and carbamoyl phosphate: step 3/3. The chain is Argininosuccinate lyase from Clavibacter michiganensis subsp. michiganensis (strain NCPPB 382).